Consider the following 226-residue polypeptide: Ras-related protein RGP1 (226 aa).

Residue Gly-25–Ser-32 coordinates GTP. The Effector region signature appears at Ser-47–Phe-55. GTP is bound by residues Asp-73–Gln-77 and Asn-131–Asp-134. S-geranylgeranyl cysteine attachment occurs at residues Cys-223 and Cys-224.

It belongs to the small GTPase superfamily. Rab family.

Its subcellular location is the cell membrane. Functionally, may play an important role in plant growth and development. This is Ras-related protein RGP1 (RGP1) from Oryza sativa subsp. japonica (Rice).